A 287-amino-acid chain; its full sequence is Nematocyst expressed protein 6 (287 aa).

A signal peptide spans 1–20; sequence MKGFIFAGVLVSALICLAEG. Positions 53–249 constitute a Peptidase M12A domain; it reads RAALRDRYLW…RQTNLMYKCN (197 aa). 2 cysteine pairs are disulfide-bonded: Cys95–Cys248 and Cys116–Cys139. His146 serves as a coordination point for Zn(2+). The active site involves Glu147. Residues His150 and His156 each contribute to the Zn(2+) site. The segment at 249 to 287 is disordered; that stretch reads NAQGDSELQPVNDEDEDKDGGDSKKKPDPKGPKPGEIEE. A compositionally biased stretch (basic and acidic residues) spans 268 to 287; the sequence is GGDSKKKPDPKGPKPGEIEE.

It depends on Zn(2+) as a cofactor. As to expression, nematocyte and pharyngeal gland.

It localises to the secreted. It is found in the nematocyst. In terms of biological role, metalloprotease. In Nematostella vectensis (Starlet sea anemone), this protein is Nematocyst expressed protein 6.